Reading from the N-terminus, the 325-residue chain is Phenylalanine--tRNA ligase alpha subunit (325 aa).

Glu-251 contributes to the Mg(2+) binding site.

Belongs to the class-II aminoacyl-tRNA synthetase family. Phe-tRNA synthetase alpha subunit type 1 subfamily. In terms of assembly, tetramer of two alpha and two beta subunits. The cofactor is Mg(2+).

It is found in the cytoplasm. The enzyme catalyses tRNA(Phe) + L-phenylalanine + ATP = L-phenylalanyl-tRNA(Phe) + AMP + diphosphate + H(+). The sequence is that of Phenylalanine--tRNA ligase alpha subunit (pheS) from Thermotoga maritima (strain ATCC 43589 / DSM 3109 / JCM 10099 / NBRC 100826 / MSB8).